Here is a 3970-residue protein sequence, read N- to C-terminus: MAYIPSSSEPIAIIGSACRFPGHSTSPSRLWELLRNPYDLTKQVPEGRFNVDGFHHPDGEHHGTTNAPNGYWLEEDPRRFDSTFFNITPKEAEAIDPQGKVLLEAVYEGLESAGLTLEGCSGSQVGVYVGTMTADYDILTGKDELTFSQYCATGTSRAIISNRVSYFFHWNGPSMTIDTACSSSLVAMHQAVLGLRSGESTMACVAGANLMLSPEPFICESSLHMLSPDGKSKMWDQSADGYARGEGVGVVFLKTLSRALADGDHIECIVRETGVNSDGRTKGITMPSSLAQAALIQDTYRRSGLDALNPDHRCQYFEAHGTGTQAGDPTEAEAIYKAFFGEDEELQEDGSILVGSIKTIIGHTEGAAGVAGVLKAALALKHAQVPPNQHLKSMNPRVVPFTRRLHVPNTLIPWPSVRPGHPLRASVNSFGFGGTNSHAILESYVPAIHGGHLAASIEKPIEHPPGFPLVLSANSAEALKDKVEQYIELLESEPEIDLQDLAWTLATRRSELPYRVSFSPVAGRERLLQEMRERLQTTEGNSSLGVRSKTVNHERGRILGIFTGQGAQWPQMGQQLIQRSPRFKEVIQSLDAVLRSCPDPPAWSIAHELLAPPTSSRLSEAALSQPLCTAVQIALVDILHEAGVELAAAVGHSSGEIAAAYAAGILTAPDAILIAYYRGFHAGLAQGPEGCRGGMMAVGMGVNEALEFCEQPAFLHHLHIAASNSPASVTISGDLEPLKQAKALLDERGTFARLLKVDTAYHSHHMDRCAAPYLQSLQAANIAPLSLTRSCVWVSSVYGPSGAPTLRELSGRYWKDNMVQPVFFTEAVTRALTEEGPFDMALEIGPHPALQGPAVQTMQEVNGSALPYAGLLHRGRDDLASVISTMGLIWSLLGSSSIDFDALSVALGNERSDCRVVKDLPSYPWDHTHMYHRQPRMAKQYLNRPARPHELLGVRTSDDTESEWRWRNLLKPSTLPWLKDHRFQDQIIVPAAAYCVMAFEAARALTTKPVKLVEIQNLSIKRGITMSDDSQGVETIFMLRKEPTVPGEGVISASFILDFVPGDADAQGTNAVKGMVHLHLGEPSAETLPRRSLPPPSGLNRVDLDEFYGSIKDIGLGYTGPFRAMTSLQRRLDFATGTLPKPHPAETSTLPVAPSLLDACFQAAFAAYAAPGDGSLWTSFLPQEIQNIRFNLDLCPVNPGPAATVNVDAVITQFSSASPESPANFSGDICVFNANGNMEVQVEGLTVVALSSTGPANDCELFIETVYKPDPYTGIVEARTEGINEEYVALQRACMRIADHFLHPNRTAGKPQQTPEAMQTGLADSPFRGYLELLISCGRTAPSRLPTAITEILMHFNEQSALQSHIRASVSQISHRFPQLRVLEITLGELQKYVTDAVVAGLAAPFHSYSHLFETTEKDAPSLLSAQTSIQDSRFRLLAFDKTALLSEQFPDETFDLVILSDGNRKNATLTSQLDGVHQLLAPGGYVFCVHSTGIPLQDRLLNPQKHHQSLSLQTLLRATPRVQGDFDLISSWTSPLRTIALSIRQSMSADVRHLIMPLTATDVSYMSDTVLLIGGETGETAQLSYQLAAILRDKSLEVVTAPRLEDVVSTSMGTVKAVIVLSDLDKPVLSSVNSSEFTALKQILVPNMSVLWLTSGFRDDQPYHYGTVGLFRSIRTETPQLKLQILDVAHISGAETVIAECFLRLITYLDSESTPLWTSEPELVWDGQHLLIPRVLPIDDLNRRYNSTRRVVHNYQNASLQVVQVVARWNGDRYTHHAVEATPSKASAPADEHFVNLRVLYSSAWAIEIKKGFHAFVSVATDSASRHLLALSPTNSSLITIPATHVHALPATGLDLSALLNRIVATLLAQSLLRQASPGGLLVHEADSFFADTLQRLNDEVRLLCFSTTDLALDDNRFIRLHPLSTKDATKAAVPSSRISSVADFSLGLTPTALVGLKSSTCMLIKAMDSLVKTEASILDNGNALSTAQDALLVVRWVVETALEELGSTRKPHTTTRVSDVLDKGLQPLGAVLDWTENVHVPLRVNRFDPGSQMRGNKTYVMIGLTGELGQSLCQFMVSHGARHLVVASRNPDKSPAWKTDLEKQGATIQVLSVDVTNVDAVRQLRVDLETSMPPVGGIVNGAMVLSDGLFADMPVESLQKALAPKVLGSQNLHDVFSDVDLDFFVMFSSLTGVPGNQGQSNYTAANMFMAGLAAQRRKAGQAASVLDIGMVSGIGYINRTDGAKIYANLKRQGYMPISERDIHGMFIEAIHCGRPTSTTGAQLTTGLQRFGVEGEEPLYWHTDPRFSHHRVLRNAVHKSTVSSSVESLKSRISEVQSQTAIAAILTESFASHVEAMLHLDPGSLDKETAIINLGVDSLMAVEIRSWFLAEVEKDMPVLKVLGGSSVATLAEEVAKELFEDRSTSAPPPMDLDKNSFDLGSVHGSSTDPSSNSDSKSGFDGFSSDDSSDIANDDSDPTAQCDQIEPMSLSQARMWLPYLMLQDKTAYNCTTSYRLIGQLDIPRFERALRSLLQSHQAFRTLFYTDHETGEAMQAIVPTSSTFSLRKVGSANDSSDVKVEHDRVAQHVYELERGDSFIATLVTHRPDYHTVIFGYHHIILDGVSWQIFLQELDRFYADPQRRPSLGVDFLDFSTRQHHDLTSIPSLSKRQFWKMTFASGSLPESLPLFPFAKAPARMPLTQYRVTEYFVELDRSLAAKIRSASTTNQTTAFHFYLSVFSVMMYRMLGVTDLCIGMTDANRNDQAFLETIGLLLDMLPLRFRLDKTPSDESAFADHLRATRDIVYSALGNSGVPLETILQDIGAESSATELPLFQAVVNYRMGAIKHKSIGDLGLEYLSYEDAGHPFDFILTIDEDEGRAGLTLSMQDYLYDRAGANIFLDSYIHLLEFFATTPTERVATPPAFAPALERTAIELGTGPRLSDPWEEPTLVHRIDHMAAKYPSDVALGDERGSLSYKAMSDRVNAIATQLLAVGAQVSTRVAVFGTPSTDNICSLLAILRIGAIYVPCDVRSADERLRTILTESEATVVIVNRETSSRFAKFHPDTVQAVIQLATVPIQSSPVHNAATAAGLAFIMFTSGSTGTPKGIQLTHANFLTHVQAASAYMQLGREVVLQQSAASYDASLAQIFYALANGGRLVVADNLRDTVALASILEKEAVTFTLMAPSEYLLLMEYTGDILARCSEWKVAMCGGEAFPPRLKGDFGRLGHGELSVYNAYGPTEIAVASNIGEVAIPRKEAAGESNDGDESHVPIGSALPEYNVYLVNEDIEPVPLGCPGQIAVAGPAVSAGYLKNEPLTSDKFPLVGERFHPEKSTRVYLTGDLARMLSNGSMVYLGRIESDTQIKLRGIRVELGDIANAILKTSRGVIANAAVGVRNPGPDQFLVAYVVLSGEKGTKRPANVRQYLDQLLVDLPLPQAMKPAVAVDVGSSLPMTSSGKLDMRALNARPLPASGDEDGDEDTETETGADADADAGADTTLSDIHSKLREIWNRALGGHTSIPITPSSNFFAVGGSSLSLLKMQALVQREFDLRIALPELFRTSTFGAIAERILRGVSAGFTEEEVEDTVPSSSPVDIIDWKKETALSETLRSLASSSQSDTRSPPMRRRPLTVILTGATGFLGRAIARALQARDDVLHIHCIAVRNPHSSAALELERTCDKVILHAGDLALPFLGMMEEEARLVFEEADVIVHNGADVSFLKSYQTLRGPNLRATQTLVEMTAHRQVPFHFVSTAGVATTLSEGSSPVIDEISLANHPPPTSRTGDAVLIDGYVASKWASETFLEHVHAQLALPVRIYRPSSITGADAPALDVMHNVLNLSRRMRALPDLGTWTGYFDFIRVETVAEEIAAGVTASPTPTATTPTPSGVEFIHLSGEKLIPVAEARKHLERETGYAFRTLEMAEWCREAAGYGLPALVAGYLESLEGQALSFPRLRSRIAEWGGGGREVVAV.

The Ketosynthase family 3 (KS3) domain maps to 8–443 (SEPIAIIGSA…GTNSHAILES (436 aa)). Catalysis depends on for beta-ketoacyl synthase activity residues C181, H320, and H363. The interval 561-876 (IFTGQGAQWP…PYAGLLHRGR (316 aa)) is malonyl-CoA:ACP transacylase (MAT) domain. An N-terminal hotdog fold region spans residues 949 to 1083 (HELLGVRTSD…GMVHLHLGEP (135 aa)). A dehydratase (DH) domain region spans residues 949–1253 (HELLGVRTSD…GLTVVALSST (305 aa)). The PKS/mFAS DH domain maps to 949 to 1256 (HELLGVRTSD…VVALSSTGPA (308 aa)). H981 acts as the Proton acceptor; for dehydratase activity in catalysis. The C-terminal hotdog fold stretch occupies residues 1098–1256 (GLNRVDLDEF…VVALSSTGPA (159 aa)). D1158 (proton donor; for dehydratase activity) is an active-site residue. Positions 2060–2234 (TYVMIGLTGE…ASVLDIGMVS (175 aa)) are ketoreductase (KR) domain. The 78-residue stretch at 2342 to 2419 (AIAAILTESF…TLAEEVAKEL (78 aa)) folds into the Carrier 1 domain. S2379 carries the O-(pantetheine 4'-phosphoryl)serine modification. A disordered region spans residues 2420-2482 (FEDRSTSAPP…NDDSDPTAQC (63 aa)). Residues 2445-2466 (GSSTDPSSNSDSKSGFDGFSSD) show a composition bias toward low complexity. Acidic residues predominate over residues 2467 to 2477 (DSSDIANDDSD). A condensation (C) domain region spans residues 2487–2919 (PMSLSQARMW…ATTPTERVAT (433 aa)). The segment at 2974 to 3381 (SYKAMSDRVN…LGDIANAILK (408 aa)) is adenylation (A) domain. The interval 3466–3495 (RPLPASGDEDGDEDTETETGADADADAGAD) is disordered. Acidic residues predominate over residues 3472-3492 (GDEDGDEDTETETGADADADA). The region spanning 3496 to 3574 (TTLSDIHSKL…AIAERILRGV (79 aa)) is the Carrier 2 domain. The residue at position 3534 (S3534) is an O-(pantetheine 4'-phosphoryl)serine. Positions 3633 to 3866 (LTGATGFLGR…FIRVETVAEE (234 aa)) are reductase (R) domain.

It in the C-terminal section; belongs to the NRP synthetase family.

The protein operates within secondary metabolite biosynthesis. Polyketide synthase-nonribosomal peptide synthetase hybrid; part of the him gene cluster that mediates the biosynthesis of himeic acid A, a ubiquitin-activating enzyme (E1) inhibitor. First, himA, together with the trans-enoyl reductase himH, catalyzes the formation of apolyketide chain, which is then condensed with leucine by the NRPS activity of himA. Dieckmann cyclization and release from himA gives a tetramic acid intermediate as the product of himA PKS-NRPS. HimG then catalyzes alpha-oxidation of the tetramic acid ring, with a subsequent rearrangement to yield apyrone intermediate. Two terminal methyl groups of polyketide and amide side chains are oxidized to carboxylic acids by himC cytochrome P450 monooxygenase to form himeic acid A. Himeic acid A is further converted to himeic acids B and C during culture growth. No gene responsible for pyrone to pyridone conversion was found in the him gene cluster and himeic acid A is non-enzymatically converted to himeic acid C by the incorporation of an ammonium nitrogen atom in a pH5 buffer, and to himeic acid B at a conversion ratio of 50% during incubation in MeOH for 5 days. The protein is Polyketide synthase-nonribosomal peptide synthetase hybrid himA of Aspergillus japonicus.